The sequence spans 457 residues: Argininosuccinate lyase (457 aa).

The protein belongs to the lyase 1 family. Argininosuccinate lyase subfamily.

Its subcellular location is the cytoplasm. The enzyme catalyses 2-(N(omega)-L-arginino)succinate = fumarate + L-arginine. It functions in the pathway amino-acid biosynthesis; L-arginine biosynthesis; L-arginine from L-ornithine and carbamoyl phosphate: step 3/3. The polypeptide is Argininosuccinate lyase (Escherichia fergusonii (strain ATCC 35469 / DSM 13698 / CCUG 18766 / IAM 14443 / JCM 21226 / LMG 7866 / NBRC 102419 / NCTC 12128 / CDC 0568-73)).